A 429-amino-acid chain; its full sequence is Adenylosuccinate synthetase (429 aa).

GTP contacts are provided by residues 13–19 (GDEGKGK) and 41–43 (GHT). The active-site Proton acceptor is D14. Positions 14 and 41 each coordinate Mg(2+). Residues 14–17 (DEGK), 39–42 (NAGH), T130, R144, Q225, T240, and R304 contribute to the IMP site. H42 serves as the catalytic Proton donor. Residue 300-306 (ATTGRAR) coordinates substrate. GTP-binding positions include R306, 332–334 (KLD), and 413–415 (STG).

It belongs to the adenylosuccinate synthetase family. In terms of assembly, homodimer. It depends on Mg(2+) as a cofactor.

It is found in the cytoplasm. The catalysed reaction is IMP + L-aspartate + GTP = N(6)-(1,2-dicarboxyethyl)-AMP + GDP + phosphate + 2 H(+). Its pathway is purine metabolism; AMP biosynthesis via de novo pathway; AMP from IMP: step 1/2. Its function is as follows. Plays an important role in the de novo pathway of purine nucleotide biosynthesis. Catalyzes the first committed step in the biosynthesis of AMP from IMP. The sequence is that of Adenylosuccinate synthetase from Pseudomonas fluorescens (strain Pf0-1).